Consider the following 367-residue polypeptide: Glutamate 5-kinase (367 aa).

Lys-10 serves as a coordination point for ATP. Ser-50, Asp-137, and Asn-149 together coordinate substrate. ATP is bound by residues 169-170 (TD) and 211-217 (TGGMSTK). The 79-residue stretch at 275–353 (AGEITVDDGA…QQIAEILGYE (79 aa)) folds into the PUA domain.

The protein belongs to the glutamate 5-kinase family.

The protein resides in the cytoplasm. The catalysed reaction is L-glutamate + ATP = L-glutamyl 5-phosphate + ADP. It functions in the pathway amino-acid biosynthesis; L-proline biosynthesis; L-glutamate 5-semialdehyde from L-glutamate: step 1/2. Catalyzes the transfer of a phosphate group to glutamate to form L-glutamate 5-phosphate. The sequence is that of Glutamate 5-kinase from Pectobacterium carotovorum subsp. carotovorum (strain PC1).